The following is a 274-amino-acid chain: Ribosomal RNA small subunit methyltransferase A (274 aa).

Asn26, Leu28, Gly53, Glu74, Asp94, and Asn114 together coordinate S-adenosyl-L-methionine.

The protein belongs to the class I-like SAM-binding methyltransferase superfamily. rRNA adenine N(6)-methyltransferase family. RsmA subfamily.

The protein resides in the cytoplasm. The catalysed reaction is adenosine(1518)/adenosine(1519) in 16S rRNA + 4 S-adenosyl-L-methionine = N(6)-dimethyladenosine(1518)/N(6)-dimethyladenosine(1519) in 16S rRNA + 4 S-adenosyl-L-homocysteine + 4 H(+). Specifically dimethylates two adjacent adenosines (A1518 and A1519) in the loop of a conserved hairpin near the 3'-end of 16S rRNA in the 30S particle. May play a critical role in biogenesis of 30S subunits. The chain is Ribosomal RNA small subunit methyltransferase A from Bdellovibrio bacteriovorus (strain ATCC 15356 / DSM 50701 / NCIMB 9529 / HD100).